The sequence spans 336 residues: Glycerol-3-phosphate dehydrogenase [NAD(P)+] (336 aa).

NADPH contacts are provided by Ser-14, Trp-15, Arg-35, Arg-36, and Lys-109. Sn-glycerol 3-phosphate is bound by residues Lys-109 and Gly-139. NADPH is bound at residue Ala-143. The sn-glycerol 3-phosphate site is built by Lys-194, Asp-247, Ser-257, Arg-258, and Asn-259. Catalysis depends on Lys-194, which acts as the Proton acceptor. NADPH is bound at residue Arg-258. Residue Glu-284 participates in NADPH binding.

This sequence belongs to the NAD-dependent glycerol-3-phosphate dehydrogenase family.

The protein resides in the cytoplasm. The enzyme catalyses sn-glycerol 3-phosphate + NAD(+) = dihydroxyacetone phosphate + NADH + H(+). It catalyses the reaction sn-glycerol 3-phosphate + NADP(+) = dihydroxyacetone phosphate + NADPH + H(+). It participates in membrane lipid metabolism; glycerophospholipid metabolism. Catalyzes the reduction of the glycolytic intermediate dihydroxyacetone phosphate (DHAP) to sn-glycerol 3-phosphate (G3P), the key precursor for phospholipid synthesis. The protein is Glycerol-3-phosphate dehydrogenase [NAD(P)+] of Streptomyces avermitilis (strain ATCC 31267 / DSM 46492 / JCM 5070 / NBRC 14893 / NCIMB 12804 / NRRL 8165 / MA-4680).